Reading from the N-terminus, the 77-residue chain is Small integral membrane protein 5 (77 aa).

Residues 32–52 (IVAFSVIILFTATVLLLLLIA) form a helical membrane-spanning segment.

The protein localises to the membrane. This chain is Small integral membrane protein 5 (SMIM5), found in Homo sapiens (Human).